Consider the following 235-residue polypeptide: Hydroxyacylglutathione hydrolase (235 aa).

Histidine 53, histidine 55, aspartate 57, histidine 58, histidine 109, aspartate 127, and histidine 165 together coordinate Zn(2+).

Belongs to the metallo-beta-lactamase superfamily. Glyoxalase II family. In terms of assembly, monomer. Zn(2+) is required as a cofactor.

It carries out the reaction an S-(2-hydroxyacyl)glutathione + H2O = a 2-hydroxy carboxylate + glutathione + H(+). It functions in the pathway secondary metabolite metabolism; methylglyoxal degradation; (R)-lactate from methylglyoxal: step 2/2. Its function is as follows. Thiolesterase that catalyzes the hydrolysis of S-D-lactoyl-glutathione to form glutathione and D-lactic acid. The chain is Hydroxyacylglutathione hydrolase from Actinobacillus pleuropneumoniae serotype 7 (strain AP76).